We begin with the raw amino-acid sequence, 132 residues long: Histone H2B.1 (132 aa).

Over residues 1–13 (MSAKASKAPASKA) the composition is skewed to low complexity. A disordered region spans residues 1 to 39 (MSAKASKAPASKAPAEKKPAAKKTSSSTDPSKKRTKARK). Lys-7 is subject to N6-acetyllysine; alternate. Lys-7 participates in a covalent cross-link: Glycyl lysine isopeptide (Lys-Gly) (interchain with G-Cter in SUMO); alternate. Phosphoserine is present on Ser-11. N6-acetyllysine is present on Lys-12. Residue Lys-17 is modified to N6-acetyllysine; alternate. Lys-17 participates in a covalent cross-link: Glycyl lysine isopeptide (Lys-Gly) (interchain with G-Cter in SUMO); alternate. A Glycyl lysine isopeptide (Lys-Gly) (interchain with G-Cter in SUMO) cross-link involves residue Lys-18. A Glycyl lysine isopeptide (Lys-Gly) (interchain with G-Cter in ubiquitin) cross-link involves residue Lys-125.

The protein belongs to the histone H2B family. The nucleosome is a histone octamer containing two molecules each of H2A, H2B, H3 and H4 assembled in one H3-H4 heterotetramer and two H2A-H2B heterodimers. The octamer wraps approximately 147 bp of DNA. Post-translationally, monoubiquitinated by the UBC2-BRE1 complex to form H2BK123ub1. H2BK123ub1 gives a specific tag for epigenetic transcriptional activation and is also prerequisite for H3K4me and H3K79me formation. H2BK123ub1 also modulates the formation of double-strand breaks during meiosis and is a prerequisite for DNA-damage checkpoint activation. Phosphorylated by STE20 to form H2BS10ph during progression through meiotic prophase. May be correlated with chromosome condensation. In terms of processing, acetylated by GCN5 to form H2BK11ac and H2BK16ac. H2BK16ac can also be formed by ESA1. Acetylation of N-terminal lysines and particularly formation of H2BK11acK16ac has a positive effect on transcription. Post-translationally, sumoylation to form H2BK6su and probably also H2BK16su or H2BK17su, occurs preferentially near the telomeres and represses gene transcription.

Its subcellular location is the nucleus. It is found in the chromosome. Its function is as follows. Core component of nucleosome. Nucleosomes wrap and compact DNA into chromatin, limiting DNA accessibility to the cellular machineries which require DNA as a template. Histones thereby play a central role in transcription regulation, DNA repair, DNA replication and chromosomal stability. DNA accessibility is regulated via a complex set of post-translational modifications of histones, also called histone code, and nucleosome remodeling. This Kluyveromyces lactis (strain ATCC 8585 / CBS 2359 / DSM 70799 / NBRC 1267 / NRRL Y-1140 / WM37) (Yeast) protein is Histone H2B.1 (HTB1).